A 275-amino-acid chain; its full sequence is Large ribosomal subunit protein uL2 (275 aa).

Disordered regions lie at residues 24–47 and 227–261; these read IHKGSPHASLLESQSKTGGRNHHG and PVDHPHGGGEAKSGQGNPHPVTPWGVPTKGYKTRK.

This sequence belongs to the universal ribosomal protein uL2 family. Part of the 50S ribosomal subunit. Forms a bridge to the 30S subunit in the 70S ribosome.

Its function is as follows. One of the primary rRNA binding proteins. Required for association of the 30S and 50S subunits to form the 70S ribosome, for tRNA binding and peptide bond formation. It has been suggested to have peptidyltransferase activity; this is somewhat controversial. Makes several contacts with the 16S rRNA in the 70S ribosome. This is Large ribosomal subunit protein uL2 from Xylella fastidiosa (strain M12).